The primary structure comprises 101 residues: Large ribosomal subunit protein uL24 (101 aa).

It belongs to the universal ribosomal protein uL24 family. As to quaternary structure, part of the 50S ribosomal subunit.

In terms of biological role, one of two assembly initiator proteins, it binds directly to the 5'-end of the 23S rRNA, where it nucleates assembly of the 50S subunit. One of the proteins that surrounds the polypeptide exit tunnel on the outside of the subunit. The protein is Large ribosomal subunit protein uL24 of Paracoccus denitrificans (strain Pd 1222).